The chain runs to 220 residues: Ribose-5-phosphate isomerase A (220 aa).

Substrate is bound by residues 25–28 (TGST), 80–83 (DGAD), and 93–96 (KGGG). Catalysis depends on glutamate 102, which acts as the Proton acceptor. Residue lysine 120 coordinates substrate.

This sequence belongs to the ribose 5-phosphate isomerase family. As to quaternary structure, homodimer.

It carries out the reaction aldehydo-D-ribose 5-phosphate = D-ribulose 5-phosphate. The protein operates within carbohydrate degradation; pentose phosphate pathway; D-ribose 5-phosphate from D-ribulose 5-phosphate (non-oxidative stage): step 1/1. In terms of biological role, catalyzes the reversible conversion of ribose-5-phosphate to ribulose 5-phosphate. The chain is Ribose-5-phosphate isomerase A from Bacillus cereus (strain ATCC 14579 / DSM 31 / CCUG 7414 / JCM 2152 / NBRC 15305 / NCIMB 9373 / NCTC 2599 / NRRL B-3711).